A 213-amino-acid chain; its full sequence is ER lumen protein-retaining receptor erd-2.1 (213 aa).

At methionine 1–asparagine 2 the chain is on the lumenal side. The chain crosses the membrane as a helical span at residues leucine 3 to leucine 21. Over lysine 22–arginine 35 the chain is Cytoplasmic. Residues serine 36–threonine 53 form a helical membrane-spanning segment. Residues asparagine 54 to threonine 61 lie on the Lumenal side of the membrane. Residues alanine 62–alanine 80 traverse the membrane as a helical segment. Residues lysine 81 to glutamate 96 are Cytoplasmic-facing. The chain crosses the membrane as a helical span at residues phenylalanine 97 to asparagine 110. Over histidine 111–glutamate 117 the chain is Lumenal. The helical transmembrane segment at valine 118 to methionine 137 threads the bilayer. Topologically, residues leucine 138–alanine 149 are cytoplasmic. Residues histidine 150–tyrosine 168 traverse the membrane as a helical segment. Residues arginine 169–proline 178 are Lumenal-facing. The helical transmembrane segment at isoleucine 179–isoleucine 199 threads the bilayer. Topologically, residues threonine 200–alanine 213 are cytoplasmic.

This sequence belongs to the ERD2 family.

The protein localises to the endoplasmic reticulum membrane. Functionally, required for the retention of luminal endoplasmic reticulum proteins. Determines the specificity of the luminal ER protein retention system. Also required for normal vesicular traffic through the Golgi. The polypeptide is ER lumen protein-retaining receptor erd-2.1 (Caenorhabditis elegans).